The chain runs to 460 residues: ATP synthase subunit beta (460 aa).

An ATP-binding site is contributed by 150–157; sequence GGAGVGKT.

It belongs to the ATPase alpha/beta chains family. F-type ATPases have 2 components, CF(1) - the catalytic core - and CF(0) - the membrane proton channel. CF(1) has five subunits: alpha(3), beta(3), gamma(1), delta(1), epsilon(1). CF(0) has three main subunits: a(1), b(2) and c(9-12). The alpha and beta chains form an alternating ring which encloses part of the gamma chain. CF(1) is attached to CF(0) by a central stalk formed by the gamma and epsilon chains, while a peripheral stalk is formed by the delta and b chains.

It is found in the cell inner membrane. The catalysed reaction is ATP + H2O + 4 H(+)(in) = ADP + phosphate + 5 H(+)(out). In terms of biological role, produces ATP from ADP in the presence of a proton gradient across the membrane. The catalytic sites are hosted primarily by the beta subunits. The protein is ATP synthase subunit beta of Enterobacter sp. (strain 638).